A 395-amino-acid polypeptide reads, in one-letter code: S-adenosylmethionine synthase (395 aa).

Residue H14 participates in ATP binding. Position 16 (D16) interacts with Mg(2+). E42 contacts K(+). Residues E55 and Q98 each coordinate L-methionine. Positions 98–108 (QSPDIAMGVDK) are flexible loop. ATP is bound by residues 175-177 (DGK), 242-243 (RF), D251, 257-258 (RK), A274, and K278. D251 contacts L-methionine. K282 is an L-methionine binding site.

This sequence belongs to the AdoMet synthase family. As to quaternary structure, homotetramer; dimer of dimers. Requires Mg(2+) as cofactor. K(+) serves as cofactor.

The protein localises to the cytoplasm. It catalyses the reaction L-methionine + ATP + H2O = S-adenosyl-L-methionine + phosphate + diphosphate. It functions in the pathway amino-acid biosynthesis; S-adenosyl-L-methionine biosynthesis; S-adenosyl-L-methionine from L-methionine: step 1/1. Functionally, catalyzes the formation of S-adenosylmethionine (AdoMet) from methionine and ATP. The overall synthetic reaction is composed of two sequential steps, AdoMet formation and the subsequent tripolyphosphate hydrolysis which occurs prior to release of AdoMet from the enzyme. In Thermosipho melanesiensis (strain DSM 12029 / CIP 104789 / BI429), this protein is S-adenosylmethionine synthase.